The chain runs to 523 residues: 3-hydroxybenzoate--CoA ligase (523 aa).

Belongs to the ATP-dependent AMP-binding enzyme family. Benzoate-CoA ligase subfamily.

It carries out the reaction 3-hydroxybenzoate + ATP + CoA = 3-hydroxybenzoyl-CoA + AMP + diphosphate. The catalysed reaction is 4-hydroxybenzoate + ATP + CoA = 4-hydroxybenzoyl-CoA + AMP + diphosphate. In terms of biological role, ligase involved in the anaerobic degradation of 3-hydroxybenzoate (3OHBz). Catalyzes the activation of 3-hydroxybenzoate to 3-hydroxybenzoyl-CoA. Also shows high activity with protocatechuate and 4-hydroxybenzoate. Exhibits lower activity with benzoate, but cannot use 2-hydroxybenzoate or benzoate analogs containing other substituents at the ortho position, such as 2-aminobenzoate (anthranilate). The chain is 3-hydroxybenzoate--CoA ligase from Aromatoleum sp. (strain CIB) (Azoarcus sp. (strain CIB)).